Consider the following 178-residue polypeptide: GTP-dependent dephospho-CoA kinase (178 aa).

Asp-48, Ile-49, Asp-67, Lys-69, and Glu-126 together coordinate GTP.

The protein belongs to the GTP-dependent DPCK family.

The enzyme catalyses 3'-dephospho-CoA + GTP = GDP + CoA + H(+). Its pathway is cofactor biosynthesis; coenzyme A biosynthesis. Catalyzes the GTP-dependent phosphorylation of the 3'-hydroxyl group of dephosphocoenzyme A to form coenzyme A (CoA). This Methanothrix thermoacetophila (strain DSM 6194 / JCM 14653 / NBRC 101360 / PT) (Methanosaeta thermophila) protein is GTP-dependent dephospho-CoA kinase.